The following is a 325-amino-acid chain: RepFIB replication protein A (325 aa).

The disordered stretch occupies residues Ala-279–Ser-298.

The protein belongs to the initiator RepB protein family.

Its function is as follows. This protein is essential for plasmid replication; it is involved in copy control functions. In vitro, binds to the DNA repeat units, BCDD'D'', EFG and HIJ. This chain is RepFIB replication protein A (repB), found in Escherichia coli (strain K12).